Consider the following 315-residue polypeptide: Ribosomal RNA large subunit methyltransferase F (315 aa).

Belongs to the methyltransferase superfamily. METTL16/RlmF family.

The protein localises to the cytoplasm. It catalyses the reaction adenosine(1618) in 23S rRNA + S-adenosyl-L-methionine = N(6)-methyladenosine(1618) in 23S rRNA + S-adenosyl-L-homocysteine + H(+). In terms of biological role, specifically methylates the adenine in position 1618 of 23S rRNA. This is Ribosomal RNA large subunit methyltransferase F from Aeromonas salmonicida (strain A449).